The chain runs to 1097 residues: DNA-directed RNA polymerase subunit beta (1097 aa).

Residues Q1072–D1097 form a disordered region.

This sequence belongs to the RNA polymerase beta chain family. In cyanobacteria the RNAP catalytic core is composed of 2 alpha, 1 beta, 1 beta', 1 gamma and 1 omega subunit. When a sigma factor is associated with the core the holoenzyme is formed, which can initiate transcription.

It catalyses the reaction RNA(n) + a ribonucleoside 5'-triphosphate = RNA(n+1) + diphosphate. Its function is as follows. DNA-dependent RNA polymerase catalyzes the transcription of DNA into RNA using the four ribonucleoside triphosphates as substrates. The polypeptide is DNA-directed RNA polymerase subunit beta (Synechococcus sp. (strain CC9605)).